Reading from the N-terminus, the 497-residue chain is Zinc metalloproteinase nas-28 (497 aa).

The signal sequence occupies residues 1-14 (MFFPVVFFIPFVLG). Residues 15–120 (APTQKALEKI…IENGNYRSKR (106 aa)) constitute a propeptide that is removed on maturation. The N-linked (GlcNAc...) asparagine glycan is linked to N76. Positions 121-319 (QAIVDTTNFW…IGVNKLYNCT (199 aa)) constitute a Peptidase M12A domain. Disulfide bonds link C164–C318, C185–C206, C328–C339, C331–C342, C344–C353, C364–C398, and C427–C447. Position 214 (H214) interacts with Zn(2+). Residue E215 is part of the active site. The Zn(2+) site is built by H218 and H224. The N-linked (GlcNAc...) asparagine glycan is linked to N317. Residues 324-354 (IQMKCSNCGITDSRNCNQCKCPRYFTGASCD) form the EGF-like domain. The CUB domain maps to 364-483 (CNGAVLQATS…LTFSIQYRAV (120 aa)). N394 carries an N-linked (GlcNAc...) asparagine glycan.

It depends on Zn(2+) as a cofactor.

It is found in the secreted. In terms of biological role, metalloprotease. The polypeptide is Zinc metalloproteinase nas-28 (nas-28) (Caenorhabditis elegans).